Here is a 108-residue protein sequence, read N- to C-terminus: ATP synthase peripheral stalk subunit F6, mitochondrial (108 aa).

Residues methionine 1–phenylalanine 32 constitute a mitochondrion transit peptide. 3 positions are modified to N6-acetyllysine: lysine 41, lysine 46, and lysine 79. N6-acetyllysine; alternate is present on residues lysine 84 and lysine 99. N6-succinyllysine; alternate occurs at positions 84 and 99. Lysine 105 carries the post-translational modification N6-acetyllysine. A Phosphoserine modification is found at serine 108.

It belongs to the eukaryotic ATPase subunit F6 family. In terms of assembly, component of the ATP synthase complex composed at least of ATP5F1A/subunit alpha, ATP5F1B/subunit beta, ATP5MC1/subunit c (homooctomer), MT-ATP6/subunit a, MT-ATP8/subunit 8, ATP5ME/subunit e, ATP5MF/subunit f, ATP5MG/subunit g, ATP5MK/subunit k, ATP5MJ/subunit j, ATP5F1C/subunit gamma, ATP5F1D/subunit delta, ATP5F1E/subunit epsilon, ATP5PF/subunit F6, ATP5PB/subunit b, ATP5PD/subunit d, ATP5PO/subunit OSCP. ATP synthase complex consists of a soluble F(1) head domain (subunits alpha(3) and beta(3)) - the catalytic core - and a membrane F(0) domain - the membrane proton channel (subunits c, a, 8, e, f, g, k and j). These two domains are linked by a central stalk (subunits gamma, delta, and epsilon) rotating inside the F1 region and a stationary peripheral stalk (subunits F6, b, d, and OSCP).

The protein resides in the mitochondrion. It localises to the mitochondrion inner membrane. In terms of biological role, subunit F6, of the mitochondrial membrane ATP synthase complex (F(1)F(0) ATP synthase or Complex V) that produces ATP from ADP in the presence of a proton gradient across the membrane which is generated by electron transport complexes of the respiratory chain. ATP synthase complex consist of a soluble F(1) head domain - the catalytic core - and a membrane F(1) domain - the membrane proton channel. These two domains are linked by a central stalk rotating inside the F(1) region and a stationary peripheral stalk. During catalysis, ATP synthesis in the catalytic domain of F(1) is coupled via a rotary mechanism of the central stalk subunits to proton translocation. In vivo, can only synthesize ATP although its ATP hydrolase activity can be activated artificially in vitro. Part of the complex F(0) domain. Part of the complex F(0) domain and the peripheric stalk, which acts as a stator to hold the catalytic alpha(3)beta(3) subcomplex and subunit a/ATP6 static relative to the rotary elements. This Bos taurus (Bovine) protein is ATP synthase peripheral stalk subunit F6, mitochondrial.